The sequence spans 166 residues: Small ribosomal subunit protein uS5 (166 aa).

Positions 11 to 74 (LQEKLVQVNR…DQARRNMVKV (64 aa)) constitute an S5 DRBM domain.

This sequence belongs to the universal ribosomal protein uS5 family. In terms of assembly, part of the 30S ribosomal subunit. Contacts proteins S4 and S8.

Functionally, with S4 and S12 plays an important role in translational accuracy. Located at the back of the 30S subunit body where it stabilizes the conformation of the head with respect to the body. The sequence is that of Small ribosomal subunit protein uS5 from Chromohalobacter salexigens (strain ATCC BAA-138 / DSM 3043 / CIP 106854 / NCIMB 13768 / 1H11).